The chain runs to 293 residues: Glycine--tRNA ligase alpha subunit (293 aa).

Belongs to the class-II aminoacyl-tRNA synthetase family. In terms of assembly, tetramer of two alpha and two beta subunits.

The protein localises to the cytoplasm. It catalyses the reaction tRNA(Gly) + glycine + ATP = glycyl-tRNA(Gly) + AMP + diphosphate. In Sulfurimonas denitrificans (strain ATCC 33889 / DSM 1251) (Thiomicrospira denitrificans (strain ATCC 33889 / DSM 1251)), this protein is Glycine--tRNA ligase alpha subunit.